Consider the following 272-residue polypeptide: Ribosomal RNA small subunit methyltransferase A (272 aa).

S-adenosyl-L-methionine is bound by residues Asn-15, Ile-17, Gly-42, Glu-64, Asp-90, and Asn-109.

The protein belongs to the class I-like SAM-binding methyltransferase superfamily. rRNA adenine N(6)-methyltransferase family. RsmA subfamily.

It is found in the cytoplasm. The catalysed reaction is adenosine(1518)/adenosine(1519) in 16S rRNA + 4 S-adenosyl-L-methionine = N(6)-dimethyladenosine(1518)/N(6)-dimethyladenosine(1519) in 16S rRNA + 4 S-adenosyl-L-homocysteine + 4 H(+). In terms of biological role, specifically dimethylates two adjacent adenosines (A1518 and A1519) in the loop of a conserved hairpin near the 3'-end of 16S rRNA in the 30S particle. May play a critical role in biogenesis of 30S subunits. In Wolbachia sp. subsp. Drosophila simulans (strain wRi), this protein is Ribosomal RNA small subunit methyltransferase A.